A 616-amino-acid polypeptide reads, in one-letter code: GDP-Man:Man(3)GlcNAc(2)-PP-Dol alpha-1,2-mannosyltransferase (616 aa).

A topological domain (lumenal) is located at residue Met-1. A helical membrane pass occupies residues 2–21; that stretch reads GYLVVIGVIACVAYGILQVV. At 22-199 the chain is on the cytoplasmic side; the sequence is STVLPRLLLV…RLIDGDYWKR (178 aa). The segment at residues 200-220 is an intramembrane region (helical); it reads FTLIGQLFGSMVLSWEAMFEL. Topologically, residues 221–460 are cytoplasmic; sequence SPDVWIDTIG…FGLNAMWNEH (240 aa). The helical intramembrane region spans 461 to 481; sequence FGIGVVEYMSRGVIPLCHASA. Residues 482 to 616 lie on the Cytoplasmic side of the membrane; the sequence is GPLLDIVTNW…ERRSGIEKVY (135 aa).

This sequence belongs to the glycosyltransferase group 1 family.

It is found in the endoplasmic reticulum membrane. It carries out the reaction an alpha-D-Man-(1-&gt;3)-[alpha-D-Man-(1-&gt;6)]-beta-D-Man-(1-&gt;4)-beta-D-GlcNAc-(1-&gt;4)-alpha-D-GlcNAc-diphospho-di-trans,poly-cis-dolichol + 2 GDP-alpha-D-mannose = an alpha-D-Man-(1-&gt;2)-alpha-D-Man-(1-&gt;2)-alpha-D-Man-(1-&gt;3)-[alpha-D-Man-(1-&gt;6)]-beta-D-Man-(1-&gt;4)-beta-D-GlcNAc-(1-&gt;4)-alpha-D-GlcNAc-diphospho-di-trans,poly-cis-dolichol + 2 GDP + 2 H(+). Its pathway is protein modification; protein glycosylation. Functionally, GDP-Man:Man(3)GlcNAc(2)-PP-Dol alpha-1,2-mannosyltransferase that operates in the biosynthetic pathway of dolichol-linked oligosaccharides, the glycan precursors employed in protein asparagine (N)-glycosylation. The assembly of dolichol-linked oligosaccharides begins on the cytosolic side of the endoplasmic reticulum membrane and finishes in its lumen. The sequential addition of sugars to dolichol pyrophosphate produces dolichol-linked oligosaccharides containing fourteen sugars, including two GlcNAcs, nine mannoses and three glucoses. Once assembled, the oligosaccharide is transferred from the lipid to nascent proteins by oligosaccharyltransferases. Catalyzes, on the cytoplasmic face of the endoplasmic reticulum, the addition of the fourth and fifth mannose residues to the dolichol-linked oligosaccharide chain, to produce Man(5)GlcNAc(2)-PP-dolichol core oligosaccharide. The polypeptide is GDP-Man:Man(3)GlcNAc(2)-PP-Dol alpha-1,2-mannosyltransferase (ALG11) (Debaryomyces hansenii (strain ATCC 36239 / CBS 767 / BCRC 21394 / JCM 1990 / NBRC 0083 / IGC 2968) (Yeast)).